Consider the following 110-residue polypeptide: UPF0060 membrane protein SACE_5620 (110 aa).

The next 4 helical transmembrane spans lie at 8-28 (VVLF…VWQG), 34-54 (GLLW…VATF), 63-83 (ILAA…VVVD), and 89-109 (RWDL…MYAP).

Belongs to the UPF0060 family.

The protein localises to the cell membrane. This is UPF0060 membrane protein SACE_5620 from Saccharopolyspora erythraea (strain ATCC 11635 / DSM 40517 / JCM 4748 / NBRC 13426 / NCIMB 8594 / NRRL 2338).